A 63-amino-acid chain; its full sequence is MARRCEICDKGVVAGVQFSHSHRQSKRTWAPNIKKIKALVNGTPKTVRVCTRCLRSGKVQRAI.

It belongs to the bacterial ribosomal protein bL28 family.

The polypeptide is Large ribosomal subunit protein bL28 (Clostridium botulinum (strain Alaska E43 / Type E3)).